The chain runs to 256 residues: Pimeloyl-[acyl-carrier protein] methyl ester esterase (256 aa).

An AB hydrolase-1 domain is found at 15 to 242 (HLVLLHGWGL…AAHAPFISHP (228 aa)). Substrate-binding positions include Trp-22, 82 to 83 (SL), and 143 to 147 (FLALQ). The active-site Nucleophile is the Ser-82. Catalysis depends on residues Asp-207 and His-235. Residue His-235 coordinates substrate.

Belongs to the AB hydrolase superfamily. Carboxylesterase BioH family. As to quaternary structure, monomer.

Its subcellular location is the cytoplasm. It carries out the reaction 6-carboxyhexanoyl-[ACP] methyl ester + H2O = 6-carboxyhexanoyl-[ACP] + methanol + H(+). Its pathway is cofactor biosynthesis; biotin biosynthesis. Its function is as follows. The physiological role of BioH is to remove the methyl group introduced by BioC when the pimeloyl moiety is complete. It allows to synthesize pimeloyl-ACP via the fatty acid synthetic pathway through the hydrolysis of the ester bonds of pimeloyl-ACP esters. The sequence is that of Pimeloyl-[acyl-carrier protein] methyl ester esterase from Salmonella agona (strain SL483).